Consider the following 146-residue polypeptide: 3-hydroxyacyl-[acyl-carrier-protein] dehydratase FabZ (146 aa).

His-48 is a catalytic residue.

This sequence belongs to the thioester dehydratase family. FabZ subfamily.

The protein localises to the cytoplasm. It catalyses the reaction a (3R)-hydroxyacyl-[ACP] = a (2E)-enoyl-[ACP] + H2O. Functionally, involved in unsaturated fatty acids biosynthesis. Catalyzes the dehydration of short chain beta-hydroxyacyl-ACPs and long chain saturated and unsaturated beta-hydroxyacyl-ACPs. The sequence is that of 3-hydroxyacyl-[acyl-carrier-protein] dehydratase FabZ from Campylobacter jejuni subsp. jejuni serotype O:6 (strain 81116 / NCTC 11828).